Reading from the N-terminus, the 767-residue chain is AMP deaminase 3 (767 aa).

Phosphoserine is present on residues S85 and S107. Disordered regions lie at residues 89–111 (QMPP…PTTP) and 181–205 (LGHP…PLPQ). 2 residues coordinate Zn(2+): H317 and H319. Substrate is bound by residues H319 and 388–393 (KFNSKY). H586 is a binding site for Zn(2+). Residue E589 participates in substrate binding. Residue H608 is the Proton acceptor of the active site. D663 serves as a coordination point for Zn(2+). 664–667 (DPMQ) contributes to the substrate binding site.

Belongs to the metallo-dependent hydrolases superfamily. Adenosine and AMP deaminases family. Homotetramer. Zn(2+) is required as a cofactor.

The catalysed reaction is AMP + H2O + H(+) = IMP + NH4(+). Its pathway is purine metabolism; IMP biosynthesis via salvage pathway; IMP from AMP: step 1/1. In terms of biological role, AMP deaminase plays a critical role in energy metabolism. The sequence is that of AMP deaminase 3 from Homo sapiens (Human).